Reading from the N-terminus, the 157-residue chain is UPF0179 protein Mhun_1135 (157 aa).

This sequence belongs to the UPF0179 family.

This chain is UPF0179 protein Mhun_1135, found in Methanospirillum hungatei JF-1 (strain ATCC 27890 / DSM 864 / NBRC 100397 / JF-1).